A 526-amino-acid chain; its full sequence is Glucose-6-phosphate 1-dehydrogenase (526 aa).

NADP(+) is bound by residues G50–K57, R84, and K184. Residues K184, H214 to K218, E252, and D271 contribute to the D-glucose 6-phosphate site. H276 acts as the Proton acceptor in catalysis. R370 provides a ligand contact to NADP(+). D-glucose 6-phosphate-binding residues include K373 and R378. Residues K379, R383, and R406 each coordinate NADP(+). Residue Q408 coordinates D-glucose 6-phosphate. NADP(+)-binding positions include Y414–K416, D434–T436, R500, Y516, and W522.

The protein belongs to the glucose-6-phosphate dehydrogenase family.

It is found in the cytoplasm. The protein localises to the cytosol. The enzyme catalyses D-glucose 6-phosphate + NADP(+) = 6-phospho-D-glucono-1,5-lactone + NADPH + H(+). Its pathway is carbohydrate degradation; pentose phosphate pathway; D-ribulose 5-phosphate from D-glucose 6-phosphate (oxidative stage): step 1/3. Its function is as follows. Cytosolic glucose-6-phosphate dehydrogenase that catalyzes the first and rate-limiting step of the oxidative branch within the pentose phosphate pathway/shunt, an alternative route to glycolysis for the dissimilation of carbohydrates and a major source of reducing power and metabolic intermediates for fatty acid and nucleic acid biosynthetic processes. The chain is Glucose-6-phosphate 1-dehydrogenase (ZW) from Ceratitis capitata (Mediterranean fruit fly).